The primary structure comprises 286 residues: Deleted in azoospermia-like-B (286 aa).

Residues 33 to 114 (NTVFVGGIDI…PAIRKICTYV (82 aa)) form the RRM domain. One can recognise a DAZ domain in the interval 155–180 (ACPYPSSPPMAIQQIPVGCQQPGYFQ).

The protein belongs to the RRM DAZ family. Interacts with the C-terminus of pabp1 and with epabp. Prior to oocyte maturation, found in a complex with epabp and pum2 proteins and spdy1 mRNA; pum2 dissociates from the complex during maturation.

The protein localises to the cytoplasm. Its function is as follows. RNA-binding protein that is required for primordial germ cell (PGC) differentiation and indirectly necessary for the migration of PGCs through the endoderm. May promote meiotic cell division during spermatogenesis. Shows a preference for G- and U-rich RNAs and probably binds the 3'-UTR of target mRNAs. Stimulates the initiation of translation of mRNAs through the recruitment of poly(A)-binding proteins (PABPs). The protein is Deleted in azoospermia-like-B (dazl-b) of Xenopus laevis (African clawed frog).